A 200-amino-acid polypeptide reads, in one-letter code: Recombination protein RecR (200 aa).

The C4-type zinc-finger motif lies at 60–75; that stretch reads CVYCQALTEDDVCNIC. Residues 83 to 177 enclose the Toprim domain; it reads TKLCIIESML…KISRIGFGVP (95 aa).

Belongs to the RecR family.

Functionally, may play a role in DNA repair. It seems to be involved in an RecBC-independent recombinational process of DNA repair. It may act with RecF and RecO. The protein is Recombination protein RecR of Francisella tularensis subsp. holarctica (strain OSU18).